We begin with the raw amino-acid sequence, 84 residues long: MSVNLINIGFGNIVAGNRVIAVVSPESAPIKRIIQEARERGMLIDATYGRRTRAVIITDSDHVILSAIQPETVSHRLSGEDGNR.

Belongs to the RemA family.

The sequence is that of Putative regulatory protein Hore_09800 from Halothermothrix orenii (strain H 168 / OCM 544 / DSM 9562).